The following is a 472-amino-acid chain: GTPase Der (472 aa).

2 EngA-type G domains span residues alanine 3–glutamate 166 and isoleucine 178–histidine 351. Residues glycine 9 to serine 16, aspartate 56 to methionine 60, asparagine 118 to aspartate 121, glycine 184 to serine 191, aspartate 231 to valine 235, and asparagine 296 to aspartate 299 contribute to the GTP site. Positions arginine 352 to aspartate 436 constitute a KH-like domain. A disordered region spans residues alanine 434–arginine 472. Residues glutamine 450 to arginine 472 show a composition bias toward basic residues.

It belongs to the TRAFAC class TrmE-Era-EngA-EngB-Septin-like GTPase superfamily. EngA (Der) GTPase family. In terms of assembly, associates with the 50S ribosomal subunit.

Functionally, GTPase that plays an essential role in the late steps of ribosome biogenesis. The protein is GTPase Der of Halorhodospira halophila (strain DSM 244 / SL1) (Ectothiorhodospira halophila (strain DSM 244 / SL1)).